The sequence spans 85 residues: MQCLVIYDIPNDRARQRVADACLDYGLQRIQYSAFAGNLSRTHQRALFGEITRRVKGHTANVQLFVFDSKTWSDRRILEQQYDDA.

Aspartate 8 is a Mg(2+) binding site.

Belongs to the CRISPR-associated endoribonuclease Cas2 protein family. In terms of assembly, homodimer, forms a heterotetramer with a Cas1 homodimer. Mg(2+) is required as a cofactor.

Functionally, CRISPR (clustered regularly interspaced short palindromic repeat), is an adaptive immune system that provides protection against mobile genetic elements (viruses, transposable elements and conjugative plasmids). CRISPR clusters contain sequences complementary to antecedent mobile elements and target invading nucleic acids. CRISPR clusters are transcribed and processed into CRISPR RNA (crRNA). Functions as a ssRNA-specific endoribonuclease. Involved in the integration of spacer DNA into the CRISPR cassette. This Chloroflexus aurantiacus (strain ATCC 29366 / DSM 635 / J-10-fl) protein is CRISPR-associated endoribonuclease Cas2 2.